The following is a 604-amino-acid chain: Glucoamylase 1 (604 aa).

The signal sequence occupies residues 1–25 (MQLFNLPLKVSFFLVLSYFSLLVSA). The segment at 26 to 115 (ASIPSSASVQ…EFYIKYEVSG (90 aa)) is adsorption to raw starch. One can recognise a CBM21 domain in the interval 26–130 (ASIPSSASVQ…NNNSANYQVS (105 aa)). The tract at residues 116-604 (KTYYDNNNSA…SYAKAGAPAA (489 aa)) is starch degradation. N122 carries an N-linked (GlcNAc...) asparagine glycan. Positions 127-164 (YQVSTSKPTTTTATATTTTAPSTSTTTPPSRSEPATFP) are disordered. Residues 130–162 (STSKPTTTTATATTTTAPSTSTTTPPSRSEPAT) are compositionally biased toward low complexity. N167, N230, and N236 each carry an N-linked (GlcNAc...) asparagine glycan. Residue W279 coordinates substrate. D336 (proton acceptor) is an active-site residue. The Proton donor role is filled by E339. N564 carries an N-linked (GlcNAc...) asparagine glycan.

This sequence belongs to the glycosyl hydrolase 15 family.

The catalysed reaction is Hydrolysis of terminal (1-&gt;4)-linked alpha-D-glucose residues successively from non-reducing ends of the chains with release of beta-D-glucose.. In Rhizopus oryzae (Mucormycosis agent), this protein is Glucoamylase 1.